We begin with the raw amino-acid sequence, 912 residues long: Bifunctional uridylyltransferase/uridylyl-removing enzyme (912 aa).

Residues Met-1–Lys-369 are uridylyltransferase. Positions Lys-370–Thr-722 are uridylyl-removing. In terms of domain architecture, HD spans Val-486 to Leu-608. 2 ACT domains span residues Leu-723–Gln-802 and Val-834–Ala-912.

Belongs to the GlnD family. It depends on Mg(2+) as a cofactor.

It carries out the reaction [protein-PII]-L-tyrosine + UTP = [protein-PII]-uridylyl-L-tyrosine + diphosphate. The catalysed reaction is [protein-PII]-uridylyl-L-tyrosine + H2O = [protein-PII]-L-tyrosine + UMP + H(+). Its activity is regulated as follows. Uridylyltransferase (UTase) activity is inhibited by glutamine, while glutamine activates uridylyl-removing (UR) activity. Functionally, modifies, by uridylylation and deuridylylation, the PII regulatory proteins (GlnB and homologs), in response to the nitrogen status of the cell that GlnD senses through the glutamine level. Under low glutamine levels, catalyzes the conversion of the PII proteins and UTP to PII-UMP and PPi, while under higher glutamine levels, GlnD hydrolyzes PII-UMP to PII and UMP (deuridylylation). Thus, controls uridylylation state and activity of the PII proteins, and plays an important role in the regulation of nitrogen assimilation and metabolism. This Novosphingobium aromaticivorans (strain ATCC 700278 / DSM 12444 / CCUG 56034 / CIP 105152 / NBRC 16084 / F199) protein is Bifunctional uridylyltransferase/uridylyl-removing enzyme.